A 238-amino-acid chain; its full sequence is 3-dehydroquinate dehydratase (238 aa).

Residues 35–37 (ELR) and Arg-70 each bind 3-dehydroquinate. His-133 serves as the catalytic Proton donor/acceptor. The active-site Schiff-base intermediate with substrate is the Lys-160. The 3-dehydroquinate site is built by Arg-202 and Gln-225.

The protein belongs to the type-I 3-dehydroquinase family. As to quaternary structure, homodimer.

The enzyme catalyses 3-dehydroquinate = 3-dehydroshikimate + H2O. It participates in metabolic intermediate biosynthesis; chorismate biosynthesis; chorismate from D-erythrose 4-phosphate and phosphoenolpyruvate: step 3/7. Involved in the third step of the chorismate pathway, which leads to the biosynthesis of aromatic amino acids. Catalyzes the cis-dehydration of 3-dehydroquinate (DHQ) and introduces the first double bond of the aromatic ring to yield 3-dehydroshikimate. This is 3-dehydroquinate dehydratase from Staphylococcus aureus (strain MSSA476).